A 270-amino-acid chain; its full sequence is Formamidopyrimidine-DNA glycosylase (270 aa).

The active-site Schiff-base intermediate with DNA is proline 2. Glutamate 3 (proton donor) is an active-site residue. Catalysis depends on lysine 58, which acts as the Proton donor; for beta-elimination activity. The DNA site is built by histidine 91, arginine 110, and arginine 151. The FPG-type zinc-finger motif lies at 236–270 (LVYGRDGLPCPNCGRALKHATIGQRASVWCSHCQR). Arginine 260 functions as the Proton donor; for delta-elimination activity in the catalytic mechanism.

The protein belongs to the FPG family. As to quaternary structure, monomer. Zn(2+) serves as cofactor.

The catalysed reaction is Hydrolysis of DNA containing ring-opened 7-methylguanine residues, releasing 2,6-diamino-4-hydroxy-5-(N-methyl)formamidopyrimidine.. It carries out the reaction 2'-deoxyribonucleotide-(2'-deoxyribose 5'-phosphate)-2'-deoxyribonucleotide-DNA = a 3'-end 2'-deoxyribonucleotide-(2,3-dehydro-2,3-deoxyribose 5'-phosphate)-DNA + a 5'-end 5'-phospho-2'-deoxyribonucleoside-DNA + H(+). In terms of biological role, involved in base excision repair of DNA damaged by oxidation or by mutagenic agents. Acts as a DNA glycosylase that recognizes and removes damaged bases. Has a preference for oxidized purines, such as 7,8-dihydro-8-oxoguanine (8-oxoG). Has AP (apurinic/apyrimidinic) lyase activity and introduces nicks in the DNA strand. Cleaves the DNA backbone by beta-delta elimination to generate a single-strand break at the site of the removed base with both 3'- and 5'-phosphates. This is Formamidopyrimidine-DNA glycosylase from Stenotrophomonas maltophilia (strain R551-3).